Here is an 813-residue protein sequence, read N- to C-terminus: Histone acetyltransferase KAT2B (813 aa).

2 disordered regions span residues methionine 1–alanine 55 and asparagine 380–arginine 423. Low complexity predominate over residues alanine 32–alanine 46. Positions asparagine 380–arginine 391 are enriched in polar residues. Basic and acidic residues predominate over residues proline 406–arginine 423. The 149-residue stretch at leucine 484–asparagine 632 folds into the N-acetyltransferase domain. Glutamate 551 functions as the Proton donor/acceptor in the catalytic mechanism. Residues cysteine 555–valine 557, glutamine 562–threonine 568, and tyrosine 593–glycine 596 each bind acetyl-CoA. A Bromo domain is found at lysine 704–alanine 808.

The protein belongs to the acetyltransferase family. GCN5 subfamily. As to quaternary structure, interacts with BCAS3. Interacts with SIRT1. Interacts with EP300, CREBBP and DDX17. Component of a large chromatin remodeling complex, at least composed of MYSM1, KAT2B/PCAF, RBM10 and KIF11/TRIP5. Interacts with KLF1; the interaction does not acetylate KLF1 and there is no enhancement of its transactivational activity. Interacts with NFE4. Interacts with MECOM. Interacts with NR2C2 (hypophosphorylated and unsumoylated form); the interaction promotes the transactivation activity of NR2C2. Interacts with NFE4. Interacts with MECOM. Interacts with E2F1; the interaction acetylates E2F1 augmenting its DNA-binding and transcriptional activity. Interacts with NPAS2, BMAL1 and CLOCK. Interacts (unsumoylated form) with NR2C1; the interaction promotes transactivation activity. Interacts with CEBPB. Interacts with NR4A3. Interacts with TBX5. Interacts with PLK4. Interacts with RB1; this interaction leads to RB1 acetylation. Interacts with VRK1.

It is found in the nucleus. The protein localises to the cytoplasm. It localises to the cytoskeleton. Its subcellular location is the microtubule organizing center. The protein resides in the centrosome. The enzyme catalyses L-lysyl-[histone] + acetyl-CoA = N(6)-acetyl-L-lysyl-[histone] + CoA + H(+). It carries out the reaction L-lysyl-[protein] + acetyl-CoA = N(6)-acetyl-L-lysyl-[protein] + CoA + H(+). It catalyses the reaction spermidine + acetyl-CoA = N(8)-acetylspermidine + CoA + H(+). Functions as a histone acetyltransferase (HAT) to promote transcriptional activation. Has significant histone acetyltransferase activity with core histones (H3 and H4), and also with nucleosome core particles. Has a a strong preference for acetylation of H3 at 'Lys-9' (H3K9ac). Also acetylates non-histone proteins, such as ACLY, MAPRE1/EB1, PLK4, RRP9/U3-55K and TBX5. Acts as a circadian transcriptional coactivator which enhances the activity of the circadian transcriptional activators: NPAS2-BMAL1 and CLOCK-BMAL1 heterodimers. Involved in heart and limb development by mediating acetylation of TBX5, acetylation regulating nucleocytoplasmic shuttling of TBX5. Acts as a negative regulator of centrosome amplification by mediating acetylation of PLK4. Acetylates RRP9/U3-55K, a core subunit of the U3 snoRNP complex, impairing pre-rRNA processing. Acetylates MAPRE1/EB1, promoting dynamic kinetochore-microtubule interactions in early mitosis. Also acetylates spermidine. This Mus musculus (Mouse) protein is Histone acetyltransferase KAT2B.